An 890-amino-acid polypeptide reads, in one-letter code: Serine/threonine-protein kinase D3 (890 aa).

5 positions are modified to phosphoserine: Ser-6, Ser-27, Ser-37, Ser-41, and Ser-44. The Phorbol-ester/DAG-type 1 zinc finger occupies 154–204; it reads PHTLYVHSYKAPTFCDYCGEMLWGLVRQGLKCEGCGLNYHKRCAFKIPNNC. Phosphoserine is present on residues Ser-213 and Ser-216. Residues 271-321 form a Phorbol-ester/DAG-type 2 zinc finger; sequence PHTFAVHSYTRPTICQYCKRLLKGLFRQGMQCKDCKFNCHKRCASKVPRDC. Residues 332–371 are disordered; sequence SSLGTDTDIPMDIDNNDINSDSSRGLDDTEEPSPPEDKMF. Residues Ser-364, Ser-391, and Ser-395 each carry the phosphoserine modification. Residues 416–532 form the PH domain; that stretch reads TMVKEGWMVH…WEKAIRQALM (117 aa). A Phosphotyrosine modification is found at Tyr-426. Phosphoserine is present on Ser-442. Tyr-457 is subject to Phosphotyrosine. Thr-535 is subject to Phosphothreonine. Ser-539 carries the phosphoserine modification. One can recognise a Protein kinase domain in the interval 576–832; that stretch reads IFADEVLGSG…VDKSLSHPWL (257 aa). Residues 582 to 590 and Lys-605 contribute to the ATP site; that span reads LGSGQFGIV. Asp-699 functions as the Proton acceptor in the catalytic mechanism. Residue Ser-731 is modified to Phosphoserine; by PKC. Ser-735 is subject to Phosphoserine; by autocatalysis. Tyr-742 is modified (phosphotyrosine).

It belongs to the protein kinase superfamily. CAMK Ser/Thr protein kinase family. PKD subfamily. It depends on Mg(2+) as a cofactor. In terms of tissue distribution, ubiquitous.

The protein localises to the cytoplasm. The protein resides in the membrane. It catalyses the reaction L-seryl-[protein] + ATP = O-phospho-L-seryl-[protein] + ADP + H(+). The enzyme catalyses L-threonyl-[protein] + ATP = O-phospho-L-threonyl-[protein] + ADP + H(+). Its activity is regulated as follows. Activated by DAG and phorbol esters. Phorbol-ester/DAG-type domains 1 and 2 bind both DAG and phorbol ester with high affinity and mediate translocation to the cell membrane. Autophosphorylation of Ser-735 and phosphorylation of Ser-731 by PKC relieves auto-inhibition by the PH domain. Functionally, converts transient diacylglycerol (DAG) signals into prolonged physiological effects, downstream of PKC. Involved in resistance to oxidative stress. The chain is Serine/threonine-protein kinase D3 (PRKD3) from Homo sapiens (Human).